We begin with the raw amino-acid sequence, 564 residues long: Interactor of constitutive active ROPs 3 (564 aa).

Disordered stretches follow at residues Met-1 to Thr-73 and Lys-88 to Glu-135. The span at Glu-33–Arg-44 shows a compositional bias: polar residues. 2 stretches are compositionally biased toward basic and acidic residues: residues Val-63 to Thr-73 and Thr-98 to Glu-123. Coiled-coil stretches lie at residues Ser-70 to Ala-133 and Ala-231 to Ala-514. A Phosphoserine modification is found at Ser-533.

It belongs to the ICR family. As to quaternary structure, interacts with ARAC11 in vitro. Expressed in flowers.

In terms of biological role, acts as a scaffold, mediating interaction of ROPs with different proteins. This is Interactor of constitutive active ROPs 3 (ICR3) from Arabidopsis thaliana (Mouse-ear cress).